A 104-amino-acid polypeptide reads, in one-letter code: Large ribosomal subunit protein uL24 (104 aa).

This sequence belongs to the universal ribosomal protein uL24 family. In terms of assembly, part of the 50S ribosomal subunit.

Its function is as follows. One of two assembly initiator proteins, it binds directly to the 5'-end of the 23S rRNA, where it nucleates assembly of the 50S subunit. In terms of biological role, one of the proteins that surrounds the polypeptide exit tunnel on the outside of the subunit. This is Large ribosomal subunit protein uL24 from Baumannia cicadellinicola subsp. Homalodisca coagulata.